A 271-amino-acid chain; its full sequence is Urease accessory protein UreD (271 aa).

The protein belongs to the UreD family. As to quaternary structure, ureD, UreF and UreG form a complex that acts as a GTP-hydrolysis-dependent molecular chaperone, activating the urease apoprotein by helping to assemble the nickel containing metallocenter of UreC. The UreE protein probably delivers the nickel.

The protein localises to the cytoplasm. Its function is as follows. Required for maturation of urease via the functional incorporation of the urease nickel metallocenter. This chain is Urease accessory protein UreD, found in Haemophilus influenzae (strain PittGG).